The chain runs to 257 residues: UPF0246 protein PC1_3665 (257 aa).

Belongs to the UPF0246 family.

The protein is UPF0246 protein PC1_3665 of Pectobacterium carotovorum subsp. carotovorum (strain PC1).